Reading from the N-terminus, the 366-residue chain is Growth hormone secretagogue receptor type 1 (366 aa).

Over M1–A40 the chain is Extracellular. N13 and N27 each carry an N-linked (GlcNAc...) asparagine glycan. The chain crosses the membrane as a helical span at residues P41–L66. The Cytoplasmic segment spans residues V67–R72. A helical transmembrane segment spans residues E73–M96. At P97–K117 the chain is on the extracellular side. A disulfide bridge links C116 with C198. The chain crosses the membrane as a helical span at residues L118–V139. Over E140–L162 the chain is Cytoplasmic. A helical membrane pass occupies residues V163–G183. At V184–T211 the chain is on the extracellular side. The helical transmembrane segment at V212–I235 threads the bilayer. The Cytoplasmic segment spans residues G236–K263. A helical transmembrane segment spans residues M264–L285. At F286 to Q302 the chain is on the extracellular side. A helical membrane pass occupies residues Y303–M326. Residues S327–T366 lie on the Cytoplasmic side of the membrane.

Belongs to the G-protein coupled receptor 1 family. Pituitary and hypothalamus.

The protein resides in the cell membrane. Functionally, receptor for ghrelin, coupled to G-alpha-11 proteins. Stimulates growth hormone secretion. Also binds other growth hormone releasing peptides (GHRP) (e.g. Met-enkephalin and GHRP-6) as well as non-peptide, low molecular weight secretagogues (e.g. L-692,429, MK-0677, adenosine). This chain is Growth hormone secretagogue receptor type 1 (GHSR), found in Homo sapiens (Human).